Consider the following 253-residue polypeptide: CD151 antigen (253 aa).

Topologically, residues 1 to 18 are cytoplasmic; the sequence is MGEFNEKKTTCGTVCLKY. Residues cysteine 11 and cysteine 15 are each lipidated (S-palmitoyl cysteine). A helical transmembrane segment spans residues 19 to 39; the sequence is LLFTYNCCFWLAGLAVMAVGI. Residues 40–57 lie on the Extracellular side of the membrane; sequence WTLALKSDYISLLASGTY. The helical transmembrane segment at 58–78 threads the bilayer; that stretch reads LATAYILVVAGAVVMVTGVLG. The Cytoplasmic portion of the chain corresponds to 79-91; it reads CCATFKERRNLLR. The helical transmembrane segment at 92–112 threads the bilayer; the sequence is LYFILLLIIFLLEIIAGVLAY. Residues 113-221 lie on the Extracellular side of the membrane; that stretch reads VYYQQLNTEL…LETFIQEHLR (109 aa). The N-linked (GlcNAc...) asparagine glycan is linked to asparagine 159. Residues 222 to 242 traverse the membrane as a helical segment; the sequence is VIGAVGTGIACVQVFGMIFTC. 2 S-palmitoyl cysteine lipidation sites follow: cysteine 242 and cysteine 243. At 243 to 253 the chain is on the cytoplasmic side; it reads CLYRSLKLEHY.

Belongs to the tetraspanin (TM4SF) family. As to quaternary structure, interacts with integrins ITGA3:ITGB1, ITGA5:ITGB1, ITGA3:ITGB1 and ITGA6:ITGB4 and with CD9 and CD181. Interacts (via the second extracellular domain) with integrin ITGAV:ITGB3. Interacts with ITGA3; this interaction modulates ITGA3 glycosylation pattern. Interacts with F11R. Interacts with RAC1 and CDC42; these interactions mediate physical association of RAC1 and CDC42 with integrin adhesion receptor complexes. Post-translationally, palmitoylated. Palmitoylation by ZDHHC2 regulates CD151 expression, association with other tetraspanin family proteins and function in cell adhesion. In terms of processing, ubiquitinated by RNF128 on lysine residues present in the tetraspanin amino terminus via 'Lys-48'-linked ubiquitin leading to proteasomal degradation.

The protein resides in the cell membrane. Structural component of specialized membrane microdomains known as tetraspanin-enriched microdomains (TERMs), which act as platforms for receptor clustering and signaling. Plays a role in various cellular and molecular mechanism through its association with both integrin and non-integrin proteins. These interactions facilitate critical cellular functions, including cell-to-cell communication, wound healing, platelet aggregation, trafficking, cell motility, and angiogenesis. Via interaction with JAM-A/F11R and integrin ITGA3:ITGB1, promotes the recruitment of signaling molecules such as RAC1, CDC42 and RhoGTPases to facilitate the polarization of epithelial cells and the reorganization of the actin cytoskeleton, which are critical steps in cell migration process. Regulates the glycosylation pattern of ITGA3:ITGB1 thereby modulating its activity. Plays an essential role in the maintenance of central laminin-binding integrin ITGA6:ITGB4-containing adhesion complexes. Essential for the proper assembly of the glomerular and tubular basement membranes in kidney. Contributes to T-cell activation by modulating integrin signaling leading to activation of downstream targets PTK2 and MAPK1/MAPK3. The sequence is that of CD151 antigen (CD151) from Chlorocebus aethiops (Green monkey).